The sequence spans 381 residues: Outer membrane protein assembly factor BamB (381 aa).

The signal sequence occupies residues 1 to 22 (MNLLKRYAAPVACAAAVLVFAA). A lipid anchor (N-palmitoyl cysteine) is attached at C23. A lipid anchor (S-diacylglycerol cysteine) is attached at C23.

Belongs to the BamB family. Part of the Bam complex.

The protein localises to the cell outer membrane. In terms of biological role, part of the outer membrane protein assembly complex, which is involved in assembly and insertion of beta-barrel proteins into the outer membrane. The sequence is that of Outer membrane protein assembly factor BamB from Burkholderia pseudomallei (strain K96243).